The following is a 495-amino-acid chain: Lysine--tRNA ligase (495 aa).

Residues E406 and E413 each contribute to the Mg(2+) site.

The protein belongs to the class-II aminoacyl-tRNA synthetase family. Homodimer. Requires Mg(2+) as cofactor.

The protein resides in the cytoplasm. The catalysed reaction is tRNA(Lys) + L-lysine + ATP = L-lysyl-tRNA(Lys) + AMP + diphosphate. The polypeptide is Lysine--tRNA ligase (Staphylococcus epidermidis (strain ATCC 35984 / DSM 28319 / BCRC 17069 / CCUG 31568 / BM 3577 / RP62A)).